The chain runs to 236 residues: Regulatory protein cys-3 (236 aa).

A disordered region spans residues Thr-26–Arg-89. Positions Gly-28 to Pro-37 are enriched in polar residues. The bZIP domain maps to Leu-99 to Lys-162. The tract at residues Lys-105 to Lys-137 is basic motif. The leucine-zipper stretch occupies residues Leu-141–Leu-155. A disordered region spans residues Ala-189–Asp-236. Residues Asp-193–Ser-211 show a composition bias toward basic and acidic residues. Low complexity predominate over residues Ser-212 to Asp-223.

Belongs to the bZIP family. GCN4 subfamily. In terms of assembly, binds DNA as a dimer.

Its subcellular location is the nucleus. Its function is as follows. Turns on the expression of structural genes which encode sulfur-catabolic enzymes. Binds to sequence elements upstream of these genes. The polypeptide is Regulatory protein cys-3 (cys-3) (Neurospora crassa (strain ATCC 24698 / 74-OR23-1A / CBS 708.71 / DSM 1257 / FGSC 987)).